The primary structure comprises 436 residues: Probable protein phosphatase 2C 15 (436 aa).

The PPM-type phosphatase domain occupies 30–302 (KAAKMEKPIV…DDTTCIVVDI (273 aa)). Residues aspartate 78, glycine 79, aspartate 254, and aspartate 293 each coordinate Mn(2+).

Belongs to the PP2C family. Requires Mg(2+) as cofactor. Mn(2+) is required as a cofactor.

It catalyses the reaction O-phospho-L-seryl-[protein] + H2O = L-seryl-[protein] + phosphate. The enzyme catalyses O-phospho-L-threonyl-[protein] + H2O = L-threonyl-[protein] + phosphate. This Arabidopsis thaliana (Mouse-ear cress) protein is Probable protein phosphatase 2C 15.